A 105-amino-acid chain; its full sequence is Small ribosomal subunit protein bS20 (105 aa).

This sequence belongs to the bacterial ribosomal protein bS20 family.

Binds directly to 16S ribosomal RNA. The polypeptide is Small ribosomal subunit protein bS20 (Moorella thermoacetica (strain ATCC 39073 / JCM 9320)).